Reading from the N-terminus, the 418-residue chain is Creatine kinase U-type, mitochondrial (418 aa).

Residues 1–39 (MAGPFSRLLSARPGLKLLALAGAGSLAAGILLRPESVRA) constitute a mitochondrion transit peptide. Positions 40-64 (ATGERRRLYPPSAEYPDLRKHNNCM) are cardiolipin-binding. The region spanning 46 to 132 (RLYPPSAEYP…FDPVIQERHN (87 aa)) is the Phosphagen kinase N-terminal domain. Residue Ser-152 is modified to Phosphoserine. One can recognise a Phosphagen kinase C-terminal domain in the interval 159-401 (YVLSSRVRTG…NYLIDCERRL (243 aa)). 162–166 (SSRVR) lines the ATP pocket. Ser-197 carries the phosphoserine modification. At Thr-214 the chain carries Phosphothreonine. His-225 serves as a coordination point for ATP. Residue Ser-233 is modified to Phosphoserine. ATP contacts are provided by residues Arg-270, Arg-326, 354-359 (RGTGGV), and Asp-369. Thr-356 carries the phosphothreonine modification.

The protein belongs to the ATP:guanido phosphotransferase family. As to quaternary structure, exists as an octamer composed of four MTCK homodimers. In many tissues, with highest levels in brain gut and kidney. In the kidney localized primarily in the outer medulla in the thick ascending limb and distal convoluted tubule.

The protein localises to the mitochondrion inner membrane. The catalysed reaction is creatine + ATP = N-phosphocreatine + ADP + H(+). In terms of biological role, reversibly catalyzes the transfer of phosphate between ATP and various phosphogens (e.g. creatine phosphate). Creatine kinase isoenzymes play a central role in energy transduction in tissues with large, fluctuating energy demands, such as skeletal muscle, heart, brain and spermatozoa. The protein is Creatine kinase U-type, mitochondrial (Ckmt1) of Rattus norvegicus (Rat).